We begin with the raw amino-acid sequence, 1316 residues long: DNA-directed RNA polymerase subunit beta' (1316 aa).

Residues Cys60, Cys62, Cys75, and Cys78 each contribute to the Zn(2+) site. Positions 535, 537, and 539 each coordinate Mg(2+). 4 residues coordinate Zn(2+): Cys891, Cys968, Cys975, and Cys978.

This sequence belongs to the RNA polymerase beta' chain family. In terms of assembly, the RNAP catalytic core consists of 2 alpha, 1 beta, 1 beta' and 1 omega subunit. When a sigma factor is associated with the core the holoenzyme is formed, which can initiate transcription. The cofactor is Mg(2+). Zn(2+) is required as a cofactor.

It carries out the reaction RNA(n) + a ribonucleoside 5'-triphosphate = RNA(n+1) + diphosphate. Functionally, DNA-dependent RNA polymerase catalyzes the transcription of DNA into RNA using the four ribonucleoside triphosphates as substrates. The polypeptide is DNA-directed RNA polymerase subunit beta' (Mycobacterium bovis (strain BCG / Pasteur 1173P2)).